Reading from the N-terminus, the 132-residue chain is Small ribosomal subunit protein uS11 (132 aa).

The interval 1-24 is disordered; sequence MAAQKQAARKPRRRDRKSVPVGQA. The segment covering 7 to 16 has biased composition (basic residues); the sequence is AARKPRRRDR.

It belongs to the universal ribosomal protein uS11 family. In terms of assembly, part of the 30S ribosomal subunit. Interacts with proteins S7 and S18. Binds to IF-3.

Located on the platform of the 30S subunit, it bridges several disparate RNA helices of the 16S rRNA. Forms part of the Shine-Dalgarno cleft in the 70S ribosome. This is Small ribosomal subunit protein uS11 from Bifidobacterium adolescentis (strain ATCC 15703 / DSM 20083 / NCTC 11814 / E194a).